A 142-amino-acid chain; its full sequence is Putative pre-16S rRNA nuclease (142 aa).

The protein belongs to the YqgF nuclease family.

The protein localises to the cytoplasm. In terms of biological role, could be a nuclease involved in processing of the 5'-end of pre-16S rRNA. This Mesoplasma florum (strain ATCC 33453 / NBRC 100688 / NCTC 11704 / L1) (Acholeplasma florum) protein is Putative pre-16S rRNA nuclease.